The primary structure comprises 249 residues: Probable WRKY transcription factor 64 (249 aa).

The WRKY DNA-binding region spans 97 to 165 (SPTPRPDDGF…YLGKHVCKAV (69 aa)).

This sequence belongs to the WRKY group III family.

The protein resides in the nucleus. Its function is as follows. Transcription factor. Interacts specifically with the W box (5'-(T)TGAC[CT]-3'), a frequently occurring elicitor-responsive cis-acting element. This Arabidopsis thaliana (Mouse-ear cress) protein is Probable WRKY transcription factor 64 (WRKY64).